A 416-amino-acid polypeptide reads, in one-letter code: MRIPNLKDLLEEGVSGRCVLVRCDLNVPLGDDGAITDLGRVTASVPTLKALLEAGAKIVVAAHLGRPKNGPDPKLSLEPVAAALGEQLGQNVQLVCSTDRSPVGGDALACVERLTDGDLLLLQNIRFDPRETSKVDDERLALAKQLVELVGSAGAFVSDGFGVVHRRQASVYDVATLLPHYAGILVADEIRILEQLTSSAKRPYAVVLGGSKVSDKLGVIESLATKADSIVLGGGMCFTFLAAQGFSVGKSLLETEMIETCRSLLDTYADVLRLPMDIVVTEKFVADSPPQTVAADAIPDGLMGLDIGPESVKRFATLLSNASTIFWNGPMGVFEFPAYAAGTRGVAEAIVAVTGKGAFSVVGGGDSAAAMRALSLPEGSVSHLSTGGGASLEYLEGKTLPGIEVLGREQPRGGDS.

Substrate-binding positions include 24–26, R40, 63–66, R126, and R166; these read DLN and HLGR. Residues K216, G304, E335, and 364–367 each bind ATP; that span reads GGDS.

The protein belongs to the phosphoglycerate kinase family. Monomer.

It localises to the cytoplasm. It carries out the reaction (2R)-3-phosphoglycerate + ATP = (2R)-3-phospho-glyceroyl phosphate + ADP. The protein operates within carbohydrate degradation; glycolysis; pyruvate from D-glyceraldehyde 3-phosphate: step 2/5. This is Phosphoglycerate kinase from Mycobacterium leprae (strain Br4923).